Consider the following 303-residue polypeptide: Uricase (303 aa).

At Ala-2 the chain carries N-acetylalanine. Lys-10 and Lys-23 each carry N6-acetyllysine; alternate. N6-succinyllysine; alternate occurs at positions 10 and 23. Lys-23 (charge relay system) is an active-site residue. 2 positions are modified to N6-acetyllysine: Lys-27 and Lys-36. A phosphoserine mark is found at Ser-39 and Ser-63. The active-site Charge relay system is Thr-68. Urate contacts are provided by Thr-68 and Asp-69. An N6-acetyllysine mark is found at Lys-118, Lys-122, and Lys-164. Phe-170 lines the urate pocket. Residues Lys-175 and Lys-185 each carry the N6-acetyllysine modification. Arg-187 is a urate binding site. The residue at position 220 (Lys-220) is an N6-acetyllysine; alternate. Lys-220 is subject to N6-succinyllysine; alternate. Ser-231 carries the phosphoserine modification. Urate is bound by residues Val-234, Gln-235, and Asn-261. His-263 (charge relay system) is an active-site residue. Lys-277 carries the N6-acetyllysine modification. Phosphotyrosine is present on Tyr-288. Positions 301–303 (SRL) match the Microbody targeting signal motif.

The protein belongs to the uricase family. In terms of tissue distribution, expressed in liver. Not detected in other tissues tested.

It localises to the peroxisome. The catalysed reaction is urate + O2 + H2O = 5-hydroxyisourate + H2O2. The protein operates within purine metabolism; urate degradation; (S)-allantoin from urate: step 1/3. Its activity is regulated as follows. Competitively inhibited by xanthine. Catalyzes the oxidation of uric acid to 5-hydroxyisourate, which is further processed to form (S)-allantoin. The protein is Uricase (Uox) of Rattus norvegicus (Rat).